A 418-amino-acid polypeptide reads, in one-letter code: UDP-N-acetylglucosamine 1-carboxyvinyltransferase (418 aa).

22–23 (KN) provides a ligand contact to phosphoenolpyruvate. A UDP-N-acetyl-alpha-D-glucosamine-binding site is contributed by Arg-92. Cys-116 (proton donor) is an active-site residue. Cys-116 is subject to 2-(S-cysteinyl)pyruvic acid O-phosphothioketal. Residues 121 to 125 (RPIDL), Asp-305, and Leu-327 each bind UDP-N-acetyl-alpha-D-glucosamine.

It belongs to the EPSP synthase family. MurA subfamily.

It is found in the cytoplasm. It carries out the reaction phosphoenolpyruvate + UDP-N-acetyl-alpha-D-glucosamine = UDP-N-acetyl-3-O-(1-carboxyvinyl)-alpha-D-glucosamine + phosphate. It participates in cell wall biogenesis; peptidoglycan biosynthesis. Cell wall formation. Adds enolpyruvyl to UDP-N-acetylglucosamine. The polypeptide is UDP-N-acetylglucosamine 1-carboxyvinyltransferase (Campylobacter jejuni (strain RM1221)).